The primary structure comprises 132 residues: ATP synthase epsilon chain 1 (132 aa).

The protein belongs to the ATPase epsilon chain family. F-type ATPases have 2 components, CF(1) - the catalytic core - and CF(0) - the membrane proton channel. CF(1) has five subunits: alpha(3), beta(3), gamma(1), delta(1), epsilon(1). CF(0) has three main subunits: a, b and c.

The protein resides in the cell inner membrane. Functionally, produces ATP from ADP in the presence of a proton gradient across the membrane. This Cereibacter sphaeroides (strain ATCC 17023 / DSM 158 / JCM 6121 / CCUG 31486 / LMG 2827 / NBRC 12203 / NCIMB 8253 / ATH 2.4.1.) (Rhodobacter sphaeroides) protein is ATP synthase epsilon chain 1.